Consider the following 435-residue polypeptide: Elongation factor 1-alpha (435 aa).

Residues 4 to 227 enclose the tr-type G domain; the sequence is KPHLNLIVIG…YLDQLELPPK (224 aa). The tract at residues 13–20 is G1; the sequence is GHIDHGKS. 13–20 is a binding site for GTP; that stretch reads GHIDHGKS. Ser20 lines the Mg(2+) pocket. The interval 69–73 is G2; that stretch reads GVTIN. Positions 90–93 are G3; sequence DAPG. GTP is bound by residues 90 to 94 and 152 to 155; these read DAPGH and NKMD. The segment at 152–155 is G4; the sequence is NKMD. Residues 193–195 form a G5 region; it reads VAP.

This sequence belongs to the TRAFAC class translation factor GTPase superfamily. Classic translation factor GTPase family. EF-Tu/EF-1A subfamily.

The protein resides in the cytoplasm. The catalysed reaction is GTP + H2O = GDP + phosphate + H(+). In terms of biological role, GTP hydrolase that promotes the GTP-dependent binding of aminoacyl-tRNA to the A-site of ribosomes during protein biosynthesis. The chain is Elongation factor 1-alpha from Saccharolobus solfataricus (strain ATCC 35092 / DSM 1617 / JCM 11322 / P2) (Sulfolobus solfataricus).